The following is a 162-amino-acid chain: NADH-quinone oxidoreductase subunit I (162 aa).

2 consecutive 4Fe-4S ferredoxin-type domains span residues Leu-52–Gly-82 and Thr-93–Asn-122. 8 residues coordinate [4Fe-4S] cluster: Cys-62, Cys-65, Cys-68, Cys-72, Cys-102, Cys-105, Cys-108, and Cys-112.

The protein belongs to the complex I 23 kDa subunit family. NDH-1 is composed of 14 different subunits. Subunits NuoA, H, J, K, L, M, N constitute the membrane sector of the complex. [4Fe-4S] cluster is required as a cofactor.

It localises to the cell inner membrane. It catalyses the reaction a quinone + NADH + 5 H(+)(in) = a quinol + NAD(+) + 4 H(+)(out). NDH-1 shuttles electrons from NADH, via FMN and iron-sulfur (Fe-S) centers, to quinones in the respiratory chain. The immediate electron acceptor for the enzyme in this species is believed to be ubiquinone. Couples the redox reaction to proton translocation (for every two electrons transferred, four hydrogen ions are translocated across the cytoplasmic membrane), and thus conserves the redox energy in a proton gradient. The chain is NADH-quinone oxidoreductase subunit I from Methylocella silvestris (strain DSM 15510 / CIP 108128 / LMG 27833 / NCIMB 13906 / BL2).